A 693-amino-acid chain; its full sequence is Elongation factor G (693 aa).

Residues 8–282 (EKTRNIGIMA…AVIDYLPSPL (275 aa)) enclose the tr-type G domain. Residues 17 to 24 (AHIDAGKT), 81 to 85 (DTPGH), and 135 to 138 (NKMD) contribute to the GTP site.

The protein belongs to the TRAFAC class translation factor GTPase superfamily. Classic translation factor GTPase family. EF-G/EF-2 subfamily.

It localises to the cytoplasm. In terms of biological role, catalyzes the GTP-dependent ribosomal translocation step during translation elongation. During this step, the ribosome changes from the pre-translocational (PRE) to the post-translocational (POST) state as the newly formed A-site-bound peptidyl-tRNA and P-site-bound deacylated tRNA move to the P and E sites, respectively. Catalyzes the coordinated movement of the two tRNA molecules, the mRNA and conformational changes in the ribosome. This chain is Elongation factor G, found in Staphylococcus carnosus (strain TM300).